The following is a 381-amino-acid chain: DNA repair protein RAD51 homolog 3 (381 aa).

The segment at 1 to 24 is disordered; it reads MDEDINKDTNNNNNTTDSNNNNNN. Low complexity predominate over residues 8-24; that stretch reads DTNNNNNTTDSNNNNNN. An ATP-binding site is contributed by 89 to 96; that stretch reads GVPGIGKT. The segment at 313 to 381 is disordered; the sequence is GFNHPPPLNP…NDENEMYIEN (69 aa). Residues 323 to 377 adopt a coiled-coil conformation; that stretch reads EDQEQEKEKEKRKKKNNNNNNNNNNNNNNNNNNNNNNNNNNNNNNNNKNNDENEM. A compositionally biased stretch (low complexity) spans 339–370; that stretch reads NNNNNNNNNNNNNNNNNNNNNNNNNNNNNNNK.

It belongs to the RecA family. RAD51 subfamily.

It localises to the nucleus. In terms of biological role, involved in the homologous recombination repair (HRR) pathway of double-stranded DNA breaks arising during DNA replication or induced by DNA-damaging agents. The sequence is that of DNA repair protein RAD51 homolog 3 (rad51c) from Dictyostelium discoideum (Social amoeba).